Here is a 366-residue protein sequence, read N- to C-terminus: Ribosomal RNA large subunit methyltransferase M (366 aa).

Residues Ser-188, 221–224 (CPGG), Asp-240, Asp-260, and Asp-277 each bind S-adenosyl-L-methionine. Catalysis depends on Lys-306, which acts as the Proton acceptor.

The protein belongs to the class I-like SAM-binding methyltransferase superfamily. RNA methyltransferase RlmE family. RlmM subfamily. In terms of assembly, monomer.

Its subcellular location is the cytoplasm. The enzyme catalyses cytidine(2498) in 23S rRNA + S-adenosyl-L-methionine = 2'-O-methylcytidine(2498) in 23S rRNA + S-adenosyl-L-homocysteine + H(+). Its function is as follows. Catalyzes the 2'-O-methylation at nucleotide C2498 in 23S rRNA. In Escherichia coli O127:H6 (strain E2348/69 / EPEC), this protein is Ribosomal RNA large subunit methyltransferase M.